A 541-amino-acid chain; its full sequence is Atlastin-3 (541 aa).

The interval 1–22 (MLSPQRTAAVASRGAGDAMENG) is disordered. The interval 1–25 (MLSPQRTAAVASRGAGDAMENGKPG) is N-terminal hypervariable region (HVR). Over 1–445 (MLSPQRTAAV…NVFSTFRTPA (445 aa)) the chain is Cytoplasmic. Residues 57–305 (DLDVVVVSVA…LIPYVLNPSK (249 aa)) form the GB1/RHD3-type G domain. Residues arginine 70, lysine 71, glycine 72, lysine 73, serine 74, phenylalanine 75, and arginine 109 each contribute to the GDP site. Aspartate 142 provides a ligand contact to Mg(2+). Positions 213, 214, 272, and 275 each coordinate GDP. The tract at residues 343 to 434 (MLQATAEANN…YENFCKHNGS (92 aa)) is 3HB (three-helix bundle) domain. At lysine 391 the chain carries N6-acetyllysine. Residues 446–466 (VLFTGIAALYIASGFTGFIGL) form a helical membrane-spanning segment. A topological domain (lumenal) is located at residue glutamate 467. The helical transmembrane segment at 468-488 (VVAQLFNCMVGLLLIALLTWG) threads the bilayer. Over 489–541 (YIRYSGQYRELGGAIDSGAAYVLEQASSHIGNSTQAAVRDAVVGRPPADKKSQ) the chain is Cytoplasmic.

It belongs to the TRAFAC class dynamin-like GTPase superfamily. GB1/RHD3 GTPase family. GB1 subfamily. As to quaternary structure, monomeric and homodimeric. The homodimer, transiently formed by two molecules on opposing membranes, is the active form mediating ER membrane fusion. Interacts with ZFYVE27; both proteins are involved in endoplasmic reticulum tubular network organization. Interacts with REEP5; both proteins are involved in endoplasmic reticulum tubular network organization. As to expression, expressed in cardiomyocytes (at protein level).

It localises to the endoplasmic reticulum membrane. The catalysed reaction is GTP + H2O = GDP + phosphate + H(+). Atlastin-3 (ATL3) is a membrane-anchored GTPase that mediates the GTP-dependent fusion of endoplasmic reticulum (ER) membranes, maintaining the continuous ER network. It facilitates the formation of three-way junctions where ER tubules intersect. Two atlastin-3 on neighboring ER tubules bind GTP and form loose homodimers through the GB1/RHD3-type G domains and 3HB regions. Upon GTP hydrolysis, the 3HB regions tighten, pulling the membranes together to drive their fusion. After fusion, the homodimer disassembles upon release of inorganic phosphate (Pi). Subsequently, GDP dissociates, resetting the monomers to a conformation ready for a new fusion cycle. The protein is Atlastin-3 of Mus musculus (Mouse).